A 562-amino-acid chain; its full sequence is Ikaros family zinc finger protein (562 aa).

3 consecutive C2H2-type zinc fingers follow at residues 45–67, 73–95, and 101–123; these read IKCE…IRSH, FKCH…YKIH, and FQCP…MRIH. Residues 129 to 152 form a C2H2-type 4; degenerate zinc finger; that stretch reads YRCSYCARSYKSRQSMKEHEYQCP. 4 disordered regions span residues 178–210, 293–342, 361–404, and 451–473; these read NPLA…PPYP, QNQQ…VKPT, QLED…KEDD, and DESK…STQD. Over residues 307-326 the composition is skewed to low complexity; it reads PSLSEATPSSHSSHSSAEDS. Polar residues predominate over residues 327 to 336; that stretch reads GQVNKFSPTE. A compositionally biased stretch (basic and acidic residues) spans 369–383; the sequence is DSRKRPHSFESEPTP. Polar residues predominate over residues 456–471; that stretch reads EISSVDSRSPLDQSST. C2H2-type zinc fingers lie at residues 494–516 and 522–546; these read WECK…MGVH and LVCN…HHQH.

This sequence belongs to the Ikaros C2H2-type zinc-finger protein family. As to expression, expression is strongest in the anterior Fol cells of the oikoplastic epithelium.

It is found in the nucleus. The chain is Ikaros family zinc finger protein from Oikopleura dioica (Tunicate).